The following is a 118-amino-acid chain: Large ribosomal subunit protein bL19 (118 aa).

The protein belongs to the bacterial ribosomal protein bL19 family.

Its function is as follows. This protein is located at the 30S-50S ribosomal subunit interface and may play a role in the structure and function of the aminoacyl-tRNA binding site. The protein is Large ribosomal subunit protein bL19 of Buchnera aphidicola subsp. Baizongia pistaciae (strain Bp).